A 191-amino-acid polypeptide reads, in one-letter code: Peptidyl-tRNA hydrolase (191 aa).

Tyrosine 17 contacts tRNA. The active-site Proton acceptor is histidine 22. Residues tyrosine 68, asparagine 70, and asparagine 116 each coordinate tRNA.

Belongs to the PTH family. Monomer.

The protein resides in the cytoplasm. The catalysed reaction is an N-acyl-L-alpha-aminoacyl-tRNA + H2O = an N-acyl-L-amino acid + a tRNA + H(+). Its function is as follows. Hydrolyzes ribosome-free peptidyl-tRNAs (with 1 or more amino acids incorporated), which drop off the ribosome during protein synthesis, or as a result of ribosome stalling. Functionally, catalyzes the release of premature peptidyl moieties from peptidyl-tRNA molecules trapped in stalled 50S ribosomal subunits, and thus maintains levels of free tRNAs and 50S ribosomes. This Mycobacterium avium (strain 104) protein is Peptidyl-tRNA hydrolase.